A 460-amino-acid polypeptide reads, in one-letter code: tRNA modification GTPase MnmE (460 aa).

(6S)-5-formyl-5,6,7,8-tetrahydrofolate-binding residues include R23, E86, and R126. The TrmE-type G domain occupies 222-381 (GLSTAIIGRP…LEAAIASLFF (160 aa)). N232 contributes to the K(+) binding site. GTP contacts are provided by residues 232–237 (NVGKSS), 251–257 (TDIAGTT), and 276–279 (DTAG). Mg(2+) is bound at residue S236. The K(+) site is built by T251, I253, and T256. T257 is a binding site for Mg(2+). Residue K460 participates in (6S)-5-formyl-5,6,7,8-tetrahydrofolate binding.

Belongs to the TRAFAC class TrmE-Era-EngA-EngB-Septin-like GTPase superfamily. TrmE GTPase family. As to quaternary structure, homodimer. Heterotetramer of two MnmE and two MnmG subunits. K(+) serves as cofactor.

The protein localises to the cytoplasm. In terms of biological role, exhibits a very high intrinsic GTPase hydrolysis rate. Involved in the addition of a carboxymethylaminomethyl (cmnm) group at the wobble position (U34) of certain tRNAs, forming tRNA-cmnm(5)s(2)U34. The protein is tRNA modification GTPase MnmE of Exiguobacterium sibiricum (strain DSM 17290 / CCUG 55495 / CIP 109462 / JCM 13490 / 255-15).